Here is a 231-residue protein sequence, read N- to C-terminus: MTKLPNMTTTLNHLFDLPGQICHVQCGFCTTILLVSVPFTSLSMVVTVRCGHCTSLLSVNLMKASFIPLHLLASLSHLDETGKEEVAATDGVEEEAWKVNQEKENSPTTLVSSSDNEDEDVSRVYQVVNKPPEKRQRAPSAYNCFIKEEIRRLKAQNPSMAHKEAFSLAAKNWAHFPPAHNKRAASDQCFCEEDNNAILPCNVFEDHEESNNGFRERKAQRHSIWGKSPFE.

Residues 26 to 53 (CGFCTTILLVSVPFTSLSMVVTVRCGHC) form a C4-type zinc finger. 2 disordered regions span residues 98-120 (KVNQEKENSPTTLVSSSDNEDED) and 211-231 (NNGFRERKAQRHSIWGKSPFE).

Belongs to the YABBY family. In terms of assembly, interacts with SPL/NZZ.

The protein localises to the nucleus. Its function is as follows. Essential for the formation and the abaxial-adaxial asymmetric growth of the ovule outer integument. This chain is Axial regulator YABBY 4 (YAB4), found in Arabidopsis thaliana (Mouse-ear cress).